The sequence spans 215 residues: MSKVYDWFEERLEIQAIADDITSKYVPPHVNIFYCLGGITLTCFLVQVATGFAMTFYYRPTVTEAFASVQYIMTEANFGWLIRSVHRWSASMMVLMMILHVFRVYLTGGFKKPRELTWVTGVVLGVLTASFGVTGYSLPWDQIGYWAVKIVTGVPEAIPVIGSSVVELLRGSASVGQSTLTRFYSLHTFVLPLLTAVFMLMHFSMIRKQGISGPL.

A helical membrane pass occupies residues 32 to 52; that stretch reads IFYCLGGITLTCFLVQVATGF. Cysteine 35 serves as a coordination point for heme c. Residues histidine 86 and histidine 100 each contribute to the heme b site. Helical transmembrane passes span 90 to 110, 116 to 136, and 186 to 206; these read ASMM…TGGF, LTWV…VTGY, and LHTF…FSMI. Heme b contacts are provided by histidine 187 and histidine 202.

It belongs to the cytochrome b family. PetB subfamily. The 4 large subunits of the cytochrome b6-f complex are cytochrome b6, subunit IV (17 kDa polypeptide, PetD), cytochrome f and the Rieske protein, while the 4 small subunits are PetG, PetL, PetM and PetN. The complex functions as a dimer. Heme b is required as a cofactor. Heme c serves as cofactor.

It localises to the plastid. It is found in the chloroplast thylakoid membrane. In terms of biological role, component of the cytochrome b6-f complex, which mediates electron transfer between photosystem II (PSII) and photosystem I (PSI), cyclic electron flow around PSI, and state transitions. In Lotus japonicus (Lotus corniculatus var. japonicus), this protein is Cytochrome b6.